The following is a 170-amino-acid chain: Urease accessory protein UreE (170 aa).

Belongs to the UreE family.

The protein localises to the cytoplasm. In terms of biological role, involved in urease metallocenter assembly. Binds nickel. Probably functions as a nickel donor during metallocenter assembly. In Helicobacter pylori (strain J99 / ATCC 700824) (Campylobacter pylori J99), this protein is Urease accessory protein UreE.